The following is a 644-amino-acid chain: Protein FAM149B1 (644 aa).

Disordered regions lie at residues 392 to 490 (NQSD…NTLL), 551 to 575 (TFRS…RPGR), and 609 to 644 (GHFP…RPGL). Residues 395-404 (DCRDSEDKVS) are compositionally biased toward basic and acidic residues. Residues 449 to 459 (PITSSVTQPIT) are compositionally biased toward polar residues. Residues 626-644 (QARSHNRGGSTARSSRPGL) show a composition bias toward polar residues.

The protein belongs to the FAM149 family.

The chain is Protein FAM149B1 (fam149b1) from Danio rerio (Zebrafish).